A 198-amino-acid polypeptide reads, in one-letter code: V-type ATP synthase subunit E (198 aa).

Belongs to the V-ATPase E subunit family.

Produces ATP from ADP in the presence of a proton gradient across the membrane. This is V-type ATP synthase subunit E from Clostridium novyi (strain NT).